We begin with the raw amino-acid sequence, 130 residues long: Protein NrdI (130 aa).

This sequence belongs to the NrdI family.

Its function is as follows. Probably involved in ribonucleotide reductase function. This is Protein NrdI from Bacillus velezensis (strain DSM 23117 / BGSC 10A6 / LMG 26770 / FZB42) (Bacillus amyloliquefaciens subsp. plantarum).